The sequence spans 431 residues: 23S rRNA (uracil(1939)-C(5))-methyltransferase RlmD (431 aa).

A TRAM domain is found at 8 to 68 (KRRVTTRQII…SKYSRGQVKR (61 aa)). [4Fe-4S] cluster-binding residues include Cys-81, Cys-87, Cys-90, and Cys-162. Gln-265, Phe-294, Asn-299, Glu-315, Asn-342, and Asp-363 together coordinate S-adenosyl-L-methionine. Cys-389 (nucleophile) is an active-site residue.

This sequence belongs to the class I-like SAM-binding methyltransferase superfamily. RNA M5U methyltransferase family. RlmD subfamily.

The catalysed reaction is uridine(1939) in 23S rRNA + S-adenosyl-L-methionine = 5-methyluridine(1939) in 23S rRNA + S-adenosyl-L-homocysteine + H(+). Functionally, catalyzes the formation of 5-methyl-uridine at position 1939 (m5U1939) in 23S rRNA. The sequence is that of 23S rRNA (uracil(1939)-C(5))-methyltransferase RlmD from Enterobacter sp. (strain 638).